The primary structure comprises 508 residues: Cytochrome P450 monooxygenase pkfB (508 aa).

A helical membrane pass occupies residues Phe-9–Ile-29. Residues Asn-57 and Asn-305 are each glycosylated (N-linked (GlcNAc...) asparagine). Cys-450 contacts heme.

It belongs to the cytochrome P450 family. The cofactor is heme.

It localises to the membrane. It participates in secondary metabolite biosynthesis. Functionally, cytochrome P450 monooxygenase; part of the gene cluster that mediates the biosynthesis of aspernidine A, a prenylated isoindolinone. The starting point of the biosynthesis of aspernidin A is the production of orsellinaldehyde by the non-reducing polyketide synthase pkfA. Hydroxylation, methylation of one of the phenol groups, and prenylation, presumably catalyzed by the prenyltransferase pkfE, would be needed to yield aspernidine D. Subsequently, the cytochrome P450 monooxygenase pkfB is responsible for hydroxylation of aspernidine D to yield aspernidine E. The dehydrogenase pkfF may be responsible for further oxidation of aspernidine E to form a dialdehyde intermediate which is further transformed in a series of steps, some of which are enzyme-mediated, to generate aspernidine A. The possibility that additional enzymes outside of the cluster are involved in aspernidine A biosynthesis cannot be excluded. The polypeptide is Cytochrome P450 monooxygenase pkfB (Emericella nidulans (strain FGSC A4 / ATCC 38163 / CBS 112.46 / NRRL 194 / M139) (Aspergillus nidulans)).